A 274-amino-acid chain; its full sequence is Large ribosomal subunit protein uL2cz/uL2cy (274 aa).

Disordered stretches follow at residues 1–22 and 225–252; these read MAIH…DSQV and PVDH…GYPA.

It belongs to the universal ribosomal protein uL2 family. In terms of assembly, part of the 50S ribosomal subunit.

The protein resides in the plastid. It localises to the chloroplast. The protein is Large ribosomal subunit protein uL2cz/uL2cy (rpl2-A) of Barbarea verna (Land cress).